The chain runs to 420 residues: MKKKIFTESKNGYFGEAKGGNHAFGGQYIPEILLPALKELEKAYHGVFVSKAYKKELKSLFKHFVGRPTPLIYAHNASKILKNDIYLKFEGLANTGAHKINNALGQVLLAKHMKKKRVIAETGAGQHGLATAAACARLGLECEIFMGEIDIARQRPNVFNMELFGAKVHSVSSGSKTLKDAVNEALREWSKRSDDSFYVLGSALGPYPYPDIVRDLQSVISKELKKQTKAYFSSLPDILVACVGGGSNAMGFFTHYLKEERVRLIGVEAGGIGDKEGENAIRINTINASEGIAQGYKSLFLQDKDGQLSDTHSISAGLDYAGIGPQLAHLYEVGRVEFQSATDKEALEALSFFAQYEGIIPALESSHALAAVIRLCKDIKGKKIIANISGRGDKDIFITAKALTPEHWKTFLSEEIARIG.

Lysine 99 carries the post-translational modification N6-(pyridoxal phosphate)lysine.

The protein belongs to the TrpB family. Tetramer of two alpha and two beta chains. It depends on pyridoxal 5'-phosphate as a cofactor.

The enzyme catalyses (1S,2R)-1-C-(indol-3-yl)glycerol 3-phosphate + L-serine = D-glyceraldehyde 3-phosphate + L-tryptophan + H2O. It functions in the pathway amino-acid biosynthesis; L-tryptophan biosynthesis; L-tryptophan from chorismate: step 5/5. Its function is as follows. The beta subunit is responsible for the synthesis of L-tryptophan from indole and L-serine. This chain is Tryptophan synthase beta chain, found in Helicobacter hepaticus (strain ATCC 51449 / 3B1).